Here is a 568-residue protein sequence, read N- to C-terminus: Proline--tRNA ligase (568 aa).

The protein belongs to the class-II aminoacyl-tRNA synthetase family. ProS type 1 subfamily. In terms of assembly, homodimer.

It localises to the cytoplasm. It carries out the reaction tRNA(Pro) + L-proline + ATP = L-prolyl-tRNA(Pro) + AMP + diphosphate. Functionally, catalyzes the attachment of proline to tRNA(Pro) in a two-step reaction: proline is first activated by ATP to form Pro-AMP and then transferred to the acceptor end of tRNA(Pro). As ProRS can inadvertently accommodate and process non-cognate amino acids such as alanine and cysteine, to avoid such errors it has two additional distinct editing activities against alanine. One activity is designated as 'pretransfer' editing and involves the tRNA(Pro)-independent hydrolysis of activated Ala-AMP. The other activity is designated 'posttransfer' editing and involves deacylation of mischarged Ala-tRNA(Pro). The misacylated Cys-tRNA(Pro) is not edited by ProRS. The protein is Proline--tRNA ligase of Listeria welshimeri serovar 6b (strain ATCC 35897 / DSM 20650 / CCUG 15529 / CIP 8149 / NCTC 11857 / SLCC 5334 / V8).